Here is a 536-residue protein sequence, read N- to C-terminus: Membrane protein insertase YidC (536 aa).

The next 4 membrane-spanning stretches (helical) occupy residues 5–25 (LIIAVVLSIGVLYAYSFIFPT), 353–373 (GNYGIAIIIITFILKLVFFPL), 418–438 (VNPLGGCLPMLVQIPVFFGLY), and 495–515 (MLMLPIVFTFMFLNFPSGLVI).

The protein belongs to the OXA1/ALB3/YidC family. Type 1 subfamily. Interacts with the Sec translocase complex via SecD. Specifically interacts with transmembrane segments of nascent integral membrane proteins during membrane integration.

Its subcellular location is the cell inner membrane. In terms of biological role, required for the insertion and/or proper folding and/or complex formation of integral membrane proteins into the membrane. Involved in integration of membrane proteins that insert both dependently and independently of the Sec translocase complex, as well as at least some lipoproteins. Aids folding of multispanning membrane proteins. The sequence is that of Membrane protein insertase YidC from Geobacter sp. (strain M21).